The primary structure comprises 189 residues: Glutathione-dependent formaldehyde-activating enzyme (189 aa).

A CENP-V/GFA domain is found at 20–167; sequence FAGGTLVCKC…LKELGLEPYD (148 aa). Zn(2+) contacts are provided by C27, C29, C48, C50, C53, C95, and C98.

The protein belongs to the Gfa family. Requires Zn(2+) as cofactor.

It carries out the reaction S-(hydroxymethyl)glutathione = glutathione + formaldehyde. The protein operates within one-carbon metabolism; formaldehyde degradation; formate from formaldehyde (glutathione route): step 1/3. Catalyzes the condensation of formaldehyde and glutathione to S-hydroxymethylglutathione. This Rhodopseudomonas palustris (strain BisA53) protein is Glutathione-dependent formaldehyde-activating enzyme.